We begin with the raw amino-acid sequence, 66 residues long: Large ribosomal subunit protein bL35 (66 aa).

A compositionally biased stretch (basic residues) spans 1–15 (MSKMKTKSGAKKRFK). The disordered stretch occupies residues 1–35 (MSKMKTKSGAKKRFKLTASGKVKAGQAGKRHGMIK).

This sequence belongs to the bacterial ribosomal protein bL35 family.

The protein is Large ribosomal subunit protein bL35 of Maricaulis maris (strain MCS10) (Caulobacter maris).